Here is a 263-residue protein sequence, read N- to C-terminus: Endonuclease 8 (263 aa).

P2 acts as the Schiff-base intermediate with DNA in catalysis. Residue E3 is the Proton donor of the active site. K53 (proton donor; for beta-elimination activity) is an active-site residue. DNA contacts are provided by Q70, R125, and N169. The segment at 229–263 (KVFHRDGEPCERCGSIIEKTTLSSRPFYWCPGCQH) adopts an FPG-type zinc-finger fold. The Proton donor; for delta-elimination activity role is filled by R253.

It belongs to the FPG family. Zn(2+) serves as cofactor.

It catalyses the reaction 2'-deoxyribonucleotide-(2'-deoxyribose 5'-phosphate)-2'-deoxyribonucleotide-DNA = a 3'-end 2'-deoxyribonucleotide-(2,3-dehydro-2,3-deoxyribose 5'-phosphate)-DNA + a 5'-end 5'-phospho-2'-deoxyribonucleoside-DNA + H(+). Involved in base excision repair of DNA damaged by oxidation or by mutagenic agents. Acts as a DNA glycosylase that recognizes and removes damaged bases. Has a preference for oxidized pyrimidines, such as thymine glycol, 5,6-dihydrouracil and 5,6-dihydrothymine. Has AP (apurinic/apyrimidinic) lyase activity and introduces nicks in the DNA strand. Cleaves the DNA backbone by beta-delta elimination to generate a single-strand break at the site of the removed base with both 3'- and 5'-phosphates. The polypeptide is Endonuclease 8 (Escherichia coli O17:K52:H18 (strain UMN026 / ExPEC)).